Here is a 106-residue protein sequence, read N- to C-terminus: Small ribosomal subunit protein bS6 (106 aa).

It belongs to the bacterial ribosomal protein bS6 family.

Binds together with bS18 to 16S ribosomal RNA. In Cyanothece sp. (strain PCC 7425 / ATCC 29141), this protein is Small ribosomal subunit protein bS6.